Reading from the N-terminus, the 86-residue chain is Small ribosomal subunit protein bS16 (86 aa).

The protein belongs to the bacterial ribosomal protein bS16 family.

The polypeptide is Small ribosomal subunit protein bS16 (Bordetella petrii (strain ATCC BAA-461 / DSM 12804 / CCUG 43448)).